The primary structure comprises 793 residues: Serine/threonine-protein phosphatase 1 regulatory subunit GAC1 (793 aa).

Residues 1–10 (MVIQTATTLS) are compositionally biased toward polar residues. Residues 1 to 20 (MVIQTATTLSPAKARPSFPH) form a disordered region. The CBM21 domain maps to 235–360 (TKYLNGQNVK…NNNGKNYHLF (126 aa)). Phosphoserine occurs at positions 415 and 424. Disordered regions lie at residues 450–491 (LENA…SIDL) and 616–671 (TTMD…LNDH). The segment covering 623-633 (KTSTINNSTDT) has biased composition (polar residues). Basic and acidic residues predominate over residues 637 to 648 (PSKENGTVKENK). A compositionally biased stretch (low complexity) spans 649-665 (SSANSTSAPSSSQNRAS).

In terms of biological role, regulates the activity of glycogen synthase. It is most probably a regulatory subunit for protein phosphatase type 1. The sequence is that of Serine/threonine-protein phosphatase 1 regulatory subunit GAC1 (GAC1) from Saccharomyces cerevisiae (strain ATCC 204508 / S288c) (Baker's yeast).